The following is a 402-amino-acid chain: Phosphopentomutase (402 aa).

Mn(2+) contacts are provided by Asp-10, Asp-301, His-306, Asp-342, His-343, and His-354.

Belongs to the phosphopentomutase family. It depends on Mn(2+) as a cofactor.

The protein resides in the cytoplasm. The catalysed reaction is 2-deoxy-alpha-D-ribose 1-phosphate = 2-deoxy-D-ribose 5-phosphate. The enzyme catalyses alpha-D-ribose 1-phosphate = D-ribose 5-phosphate. It participates in carbohydrate degradation; 2-deoxy-D-ribose 1-phosphate degradation; D-glyceraldehyde 3-phosphate and acetaldehyde from 2-deoxy-alpha-D-ribose 1-phosphate: step 1/2. Its function is as follows. Isomerase that catalyzes the conversion of deoxy-ribose 1-phosphate (dRib-1-P) and ribose 1-phosphate (Rib-1-P) to deoxy-ribose 5-phosphate (dRib-5-P) and ribose 5-phosphate (Rib-5-P), respectively. In Aeromonas salmonicida (strain A449), this protein is Phosphopentomutase.